The primary structure comprises 206 residues: Protein GET1 (206 aa).

Over 1-4 (MPSL) the chain is Lumenal. Residues 5 to 24 (LITVLFLNVIIYVVNTVGAA) traverse the membrane as a helical segment. The Cytoplasmic segment spans residues 25-110 (TVDGLLWLLY…TFDMTIKIAR (86 aa)). The stretch at 75–100 (AKLRRRHDKALEAYEAKNNELTQSKS) forms a coiled coil. A helical transmembrane segment spans residues 111–131 (WAATSGLMLFLQFWYSKTPIF). The Lumenal portion of the chain corresponds to 132-155 (TLPPGWIPWQVQWVLSFPRAPMGT). Residues 156–172 (VSIQIWGGACATVVALV) form a helical membrane-spanning segment. Residues 173–206 (GDAMKASLAYVSKPKIDRIKLGATMEGKEGKKRQ) are Cytoplasmic-facing.

Belongs to the WRB/GET1 family. In terms of assembly, interacts with GET3.

The protein localises to the endoplasmic reticulum membrane. Functionally, required for the post-translational delivery of tail-anchored (TA) proteins to the endoplasmic reticulum. Acts as a membrane receptor for soluble GET3, which recognizes and selectively binds the transmembrane domain of TA proteins in the cytosol. The protein is Protein GET1 of Ajellomyces capsulatus (strain G186AR / H82 / ATCC MYA-2454 / RMSCC 2432) (Darling's disease fungus).